Reading from the N-terminus, the 211-residue chain is Urease accessory protein UreG (211 aa).

G11–T18 is a GTP binding site.

It belongs to the SIMIBI class G3E GTPase family. UreG subfamily. Homodimer. UreD, UreF and UreG form a complex that acts as a GTP-hydrolysis-dependent molecular chaperone, activating the urease apoprotein by helping to assemble the nickel containing metallocenter of UreC. The UreE protein probably delivers the nickel.

The protein resides in the cytoplasm. Functionally, facilitates the functional incorporation of the urease nickel metallocenter. This process requires GTP hydrolysis, probably effectuated by UreG. The polypeptide is Urease accessory protein UreG (Photorhabdus laumondii subsp. laumondii (strain DSM 15139 / CIP 105565 / TT01) (Photorhabdus luminescens subsp. laumondii)).